Here is a 403-residue protein sequence, read N- to C-terminus: Na(+)-translocating NADH-quinone reductase subunit B (403 aa).

Transmembrane regions (helical) follow at residues Met56–Gly76, Ala121–Phe141, Ile163–Ile183, Trp220–Ile240, Thr265–Trp285, Ile287–Ser307, Met312–Phe332, Trp348–Phe368, and Gly371–Val391. Thr230 carries the post-translational modification FMN phosphoryl threonine.

This sequence belongs to the NqrB/RnfD family. In terms of assembly, composed of six subunits; NqrA, NqrB, NqrC, NqrD, NqrE and NqrF. FMN serves as cofactor.

The protein localises to the cell inner membrane. The catalysed reaction is a ubiquinone + n Na(+)(in) + NADH + H(+) = a ubiquinol + n Na(+)(out) + NAD(+). In terms of biological role, NQR complex catalyzes the reduction of ubiquinone-1 to ubiquinol by two successive reactions, coupled with the transport of Na(+) ions from the cytoplasm to the periplasm. NqrA to NqrE are probably involved in the second step, the conversion of ubisemiquinone to ubiquinol. The chain is Na(+)-translocating NADH-quinone reductase subunit B from Ectopseudomonas mendocina (strain ymp) (Pseudomonas mendocina).